Here is a 260-residue protein sequence, read N- to C-terminus: Indole-3-glycerol phosphate synthase (260 aa).

It belongs to the TrpC family.

The enzyme catalyses 1-(2-carboxyphenylamino)-1-deoxy-D-ribulose 5-phosphate + H(+) = (1S,2R)-1-C-(indol-3-yl)glycerol 3-phosphate + CO2 + H2O. It participates in amino-acid biosynthesis; L-tryptophan biosynthesis; L-tryptophan from chorismate: step 4/5. This is Indole-3-glycerol phosphate synthase from Staphylococcus aureus (strain bovine RF122 / ET3-1).